The following is a 414-amino-acid chain: Glutamyl-tRNA reductase (414 aa).

Substrate contacts are provided by residues 51–54 (TCNR), Ser107, 112–114 (EYE), and Gln118. The active-site Nucleophile is the Cys52. 187–192 (GAGEIG) lines the NADP(+) pocket.

Belongs to the glutamyl-tRNA reductase family. As to quaternary structure, homodimer.

The catalysed reaction is (S)-4-amino-5-oxopentanoate + tRNA(Glu) + NADP(+) = L-glutamyl-tRNA(Glu) + NADPH + H(+). The protein operates within porphyrin-containing compound metabolism; protoporphyrin-IX biosynthesis; 5-aminolevulinate from L-glutamyl-tRNA(Glu): step 1/2. Functionally, catalyzes the NADPH-dependent reduction of glutamyl-tRNA(Glu) to glutamate 1-semialdehyde (GSA). The polypeptide is Glutamyl-tRNA reductase (Sulfolobus acidocaldarius (strain ATCC 33909 / DSM 639 / JCM 8929 / NBRC 15157 / NCIMB 11770)).